We begin with the raw amino-acid sequence, 182 residues long: MCIGMDIRDFFAQSAGRWFSQRTSHHLAFKQTESGKSQLTIELLSVDDPAVIALCQQYDMDPAWAVCGARVSWDGTMEWDNEKHEGSTVLVPIMDQGSRMEGKLLREMGYAEKAPVAGRFSMGSDGALTLITEYETIYSEERLWFASPNLRLRTSILKRFGGFSMASFCSEIRLGVTQPANS.

Belongs to the CpcS/CpeS biliprotein lyase family.

Functionally, covalently attaches a chromophore to Cys residue(s) of phycobiliproteins. The protein is Chromophore lyase CpcS/CpeS of Thermosynechococcus vestitus (strain NIES-2133 / IAM M-273 / BP-1).